Here is a 71-residue protein sequence, read N- to C-terminus: UPF0346 protein SP70585_0986 (71 aa).

Belongs to the UPF0346 family.

This Streptococcus pneumoniae (strain 70585) protein is UPF0346 protein SP70585_0986.